The chain runs to 403 residues: Tubby-like F-box protein 6 (403 aa).

The region spanning S50–G105 is the F-box domain.

This sequence belongs to the TUB family. As to expression, ubiquitous.

The sequence is that of Tubby-like F-box protein 6 (TULP6) from Oryza sativa subsp. japonica (Rice).